Reading from the N-terminus, the 407-residue chain is MSRYHTFTAADAVEYARQFGQVADPQALVTADEIGDGNLNLVFKIRDTAGISRVIVKQALPYVRCVGESWPLTLDRARIEAETLLTHSQFCPQHTVKVLHHDAELAVMVQEDLSDHHIWRHELIQGNYYPQAAEQLGEYLAQTLFHTSDFYQSAQAKKAAVSRYTNPELCQITEDLFFTDPYIDHERNNFDPVLLPEVLSLRQDKALKLAVASLKHRFLSQAEALLHGDIHSGSIFVADGRLKTIDAEFGFYGPIGFDIGTALGNLLLNYCGLPGLAGPRDAAAGREQRLKDVQTVWQTFAARFLALSQEKAQDPALATEGYAAQFLQHVWRDAIGYCGSELIRRTIGLAHVADLDSIDDEEMRRACQRHALSLGRALILVAPHVDDVGGVVARIRQSPSSLTPQRC.

ATP-binding positions include Asn40, Lys57, and 111 to 113 (EDL). Asp229 is a binding site for substrate. 246–248 (DAE) provides a ligand contact to ATP. Arg344 provides a ligand contact to substrate.

This sequence belongs to the methylthioribose kinase family. Homodimer.

It catalyses the reaction 5-(methylsulfanyl)-D-ribose + ATP = 5-(methylsulfanyl)-alpha-D-ribose 1-phosphate + ADP + H(+). Its pathway is amino-acid biosynthesis; L-methionine biosynthesis via salvage pathway; S-methyl-5-thio-alpha-D-ribose 1-phosphate from S-methyl-5'-thioadenosine (hydrolase route): step 2/2. Catalyzes the phosphorylation of methylthioribose into methylthioribose-1-phosphate. This is Methylthioribose kinase from Yersinia pseudotuberculosis serotype O:1b (strain IP 31758).